Here is an 813-residue protein sequence, read N- to C-terminus: MRPRPAGALRAGAALSPVLLLLLLLQLLGHLWAASTPAPSSLSPGTQQDNQLGAGRVKRGWVWNQFFVVEEYTGTEPLYVGKIHSDSDEGDGTIKYTISGEGAGTIFLIDELTGDIHATERLDREQKTFYTLRAQARDRATNRLLEPESEFIIKVQDINDSEPRFLHGPYIGSVAELSPTGTSVMQVMASDADDPTYGSSARLVYSVLDGEHHFTVDPKTGVIRTAVPDLDRESQERYEVVIQATDMAGQLGGLSGSTTVTIVVTDVNDNPPRFPQKMYQFSIQESAPIGTAVGRVKAEDSDVGENTDMTYHLREESGSGGDAFKVTTDSDTQEAIIVVQKHLDFESQQVHTVVLEALNKFVDPRFADLGTFRDQAIVRVAVTDVDEPPEFRPPSGLLEVQEDAQVGSLVGVVTARDPDAANRPVRYAIDRDSDLEQIFDIDADTGAIVTGKGLDRETAGWHNITVLAMEADNHAQLSRASLRIRILDVNDNPPELATPYEAAVCEDAKPGQLIQTISVVDRDEPQGGHRFYFRLVPEEPSNPHFSLLDIEDNTAAVHTQHVGFNRQEQDVFLLPILVVDSGPPTLSSTGTLTIRICGCDSSGTIQSCNTTAFVMAASLSPGALIALLVCVLILVVLALLILTLRRHHKSHLSSDVDEDMRDNVIKYNDEGGGEQDTEAYDMSALRSLYDFGELKGGDPGGGAASPPQAASSSERHSLPRGPSSPEPDFSVFRDFISRKVALADADLSVPPYDAFQTYAFEGAGSPAASLSSLHSGSTGSEQDFAFLRAWGPRFRPLAALYAGHRGDDEAPAS.

A signal peptide spans 1-33; it reads MRPRPAGALRAGAALSPVLLLLLLLQLLGHLWA. Residues 34–621 lie on the Extracellular side of the membrane; it reads ASTPAPSSLS…AFVMAASLSP (588 aa). Cadherin domains lie at 61 to 165, 166 to 274, 275 to 391, 392 to 495, and 496 to 613; these read WVWN…EPRF, LHGP…PPRF, PQKM…PPEF, RPPS…NPPE, and LATP…TTAF. Asparagine 159 is a glycosylation site (N-linked (GlcNAc...) asparagine). Residues asparagine 463 and asparagine 609 are each glycosylated (N-linked (GlcNAc...) asparagine). The chain crosses the membrane as a helical span at residues 622–642; sequence GALIALLVCVLILVVLALLIL. Topologically, residues 643-813 are cytoplasmic; it reads TLRRHHKSHL…HRGDDEAPAS (171 aa). Residues 696-726 form a disordered region; it reads GGDPGGGAASPPQAASSSERHSLPRGPSSPE.

Strongly expressed in the pituitary gland and the brain (in the inner granular and glomerular layers of the olfactory bulb, anterior olfactory nucleus, primary olfactory cortex, Purkinje cell layer of cerebellum, and pineal gland). Low expression in lung and heart. No expression in submandibular gland, thymus, liver, spleen, adrenal, and kidney.

Its subcellular location is the cell membrane. Functionally, cadherins are calcium-dependent cell adhesion proteins. They preferentially interact with themselves in a homophilic manner in connecting cells; cadherins may thus contribute to the sorting of heterogeneous cell types. PB-cadherins may have a role in the morphological organization of pituitary gland and brain tissues. The chain is Cadherin-22 (Cdh22) from Rattus norvegicus (Rat).